A 235-amino-acid polypeptide reads, in one-letter code: Ribosomal RNA small subunit methyltransferase G (235 aa).

S-adenosyl-L-methionine contacts are provided by residues Gly74, Phe79, 97–99 (EAT), 125–126 (AE), and Arg144.

Belongs to the methyltransferase superfamily. RNA methyltransferase RsmG family.

It localises to the cytoplasm. In terms of biological role, specifically methylates the N7 position of a guanine in 16S rRNA. This chain is Ribosomal RNA small subunit methyltransferase G, found in Dehalococcoides mccartyi (strain CBDB1).